Here is a 57-residue protein sequence, read N- to C-terminus: Sec-independent protein translocase protein TatA (57 aa).

Residues 1–21 (MGISVWQLLIILLIVVMLFGT) traverse the membrane as a helical segment. The segment at 37–57 (GFRKSVSDGETTTQAEASSRS) is disordered. Residues 44-57 (DGETTTQAEASSRS) are compositionally biased toward polar residues.

The protein belongs to the TatA/E family. The Tat system comprises two distinct complexes: a TatABC complex, containing multiple copies of TatA, TatB and TatC subunits, and a separate TatA complex, containing only TatA subunits. Substrates initially bind to the TatABC complex, which probably triggers association of the separate TatA complex to form the active translocon.

It is found in the cell inner membrane. Part of the twin-arginine translocation (Tat) system that transports large folded proteins containing a characteristic twin-arginine motif in their signal peptide across membranes. TatA could form the protein-conducting channel of the Tat system. The chain is Sec-independent protein translocase protein TatA from Stutzerimonas stutzeri (Pseudomonas stutzeri).